The primary structure comprises 316 residues: Leucine-rich repeat-containing protein 73 (316 aa).

LRR repeat units follow at residues 57–78 (SLAQLNLNLGVVSSPSRIKQLA), 86–106 (SIQSLFLHGSPLTDAGLALLN), 114–137 (ALVALDLGDCMLGDEAINLICGLL), 145–166 (GLKELTLSANPGITPKGWSRLA), 174–187 (QVRVLNLDYNPLGD), 202–223 (TLEVLDLEGTGLTNQSAQTLLD), and 231–250 (ALRSLVLAENSISPELQQQI). The interval 257–296 (GEEEEEVAGGAGDTQEWERGREPAAHQRGSSSWMCPSDPS) is disordered. Residues 272–281 (EWERGREPAA) are compositionally biased toward basic and acidic residues. Positions 286 to 296 (SSSWMCPSDPS) are enriched in low complexity.

The polypeptide is Leucine-rich repeat-containing protein 73 (LRRC73) (Homo sapiens (Human)).